The primary structure comprises 545 residues: Methionine--tRNA ligase (545 aa).

The 'HIGH' region motif lies at Pro15–His25. Zn(2+) contacts are provided by Cys146, Cys149, Cys159, and Cys162. The short motif at Lys332–Ser336 is the 'KMSKS' region element. ATP is bound at residue Lys335.

Belongs to the class-I aminoacyl-tRNA synthetase family. MetG type 1 subfamily. As to quaternary structure, monomer. The cofactor is Zn(2+).

It localises to the cytoplasm. The enzyme catalyses tRNA(Met) + L-methionine + ATP = L-methionyl-tRNA(Met) + AMP + diphosphate. In terms of biological role, is required not only for elongation of protein synthesis but also for the initiation of all mRNA translation through initiator tRNA(fMet) aminoacylation. The protein is Methionine--tRNA ligase (metG) of Buchnera aphidicola subsp. Schizaphis graminum (strain Sg).